The chain runs to 993 residues: MFSASHFCSGSLMMSHPLSSLRDLEYHGAFVERHIGPNDVEIAQMLRVVGYDSLESLTDAIVPEKIRSTVALDLPKGITEEEALAKIRVIANKNRVFRSFIGQGYYGTHTPKVILRNILENPAWYTAYTPYQAEISQGRMEALINFQTMCADLTGMEIANASLLDEATAAAEAMSLAKRSAKSRSDLFFVHDAVHPQTLELLRTRAEPLGIVLRVGTPEEALQVDVFGILLQYPDTFGRIGDHRVLADAVHARGGLVAVASDLLALTLITPPGEWGADIVVGNSQRFGVPFGFGGPHAGFMACRDIYKRSIPGRLIGVSVDAAGHPAYRLALQTREQHIRREKATSNICTAQVLLAVMASMYAVYHGPQGLLRIAWRTHRMAAILAAALRGAGLTVGEYFFDTLHIVGIDALAIHCAAAAAGMNLRMIDNAQIGISLDETVTRSDVVALGQVFGVQVDVEALDAITADALPAGLLRSSAFLTHPVFNTHHSEHELLRYLRMLADKDLAMDRTMIPLGSCTMKLNATAEMIPVTWQEFACIHPLAPVVQWSGYRQLIDELEAMLVECTGYDAISLQPNSGAQGEYAGLLAIRAYHRSRGEERRNVCLIPESAHGTNPASAQLCGMQVVIIKCDRSGNVDVDDLRMKAEKYSDTLAALMVTYPSTHGVFEEAITEICEIVHAHGGQVYTDGANMNALVGVAKPGRWGSDVSHLNLHKTFCIPHGGGGPGVGPCAVKAHLAPFLPKTLPLPGDAAGLPVQGTQEAKVGMVSAANFGSASILPVSWMYITMMGAAGLRKATQVALLNANYIAKRLAPHYKTLYTGRHGLVAHECILDVRSLEKVSGVSAEDIAKRLIDFGFHAPTLSFPVAGTLMVEPTESESQQELDRFVDAMIQIRGEIAAIEKGHLDPEDNPLKQAPHTAVQVMASQWGHAYSRELAAFPLGVLHHAKYWPPVARVDNVYGDKHVMCACIPVEAYKEKGDSEIQDLIEEDASRC.

The residue at position 715 (K715) is an N6-(pyridoxal phosphate)lysine.

The protein belongs to the GcvP family. The glycine cleavage system is composed of four proteins: P, T, L and H. Pyridoxal 5'-phosphate is required as a cofactor.

It carries out the reaction N(6)-[(R)-lipoyl]-L-lysyl-[glycine-cleavage complex H protein] + glycine + H(+) = N(6)-[(R)-S(8)-aminomethyldihydrolipoyl]-L-lysyl-[glycine-cleavage complex H protein] + CO2. Functionally, the glycine cleavage system catalyzes the degradation of glycine. The P protein binds the alpha-amino group of glycine through its pyridoxal phosphate cofactor; CO(2) is released and the remaining methylamine moiety is then transferred to the lipoamide cofactor of the H protein. This chain is Glycine dehydrogenase (decarboxylating), found in Xylella fastidiosa (strain Temecula1 / ATCC 700964).